The sequence spans 402 residues: Acyl-[acyl-carrier-protein] desaturase 3, chloroplastic (402 aa).

Residues 1 to 32 (MSLTGCLPPRPPCSMRRRTSGGGASVSPVVAM) constitute a chloroplast transit peptide. The interval 1–66 (MSLTGCLPPR…EVPPQVTHTL (66 aa)) is disordered. Residues Glu139, Glu178, His181, Glu231, Glu264, and His267 each coordinate Fe cation.

This sequence belongs to the fatty acid desaturase type 2 family. In terms of assembly, homodimer. Fe(2+) serves as cofactor.

It localises to the plastid. The protein resides in the chloroplast. The protein operates within lipid metabolism; fatty acid metabolism. Functionally, introduces a cis double bond in the acyl chain of an acyl-[acyl-carrier protein]. The sequence is that of Acyl-[acyl-carrier-protein] desaturase 3, chloroplastic from Oryza sativa subsp. japonica (Rice).